The sequence spans 314 residues: ATP synthase gamma chain (314 aa).

This sequence belongs to the ATPase gamma chain family. F-type ATPases have 2 components, CF(1) - the catalytic core - and CF(0) - the membrane proton channel. CF(1) has five subunits: alpha(3), beta(3), gamma(1), delta(1), epsilon(1). CF(0) has three main subunits: a, b and c.

It localises to the cellular thylakoid membrane. Produces ATP from ADP in the presence of a proton gradient across the membrane. The gamma chain is believed to be important in regulating ATPase activity and the flow of protons through the CF(0) complex. The sequence is that of ATP synthase gamma chain from Synechococcus sp. (strain JA-3-3Ab) (Cyanobacteria bacterium Yellowstone A-Prime).